A 150-amino-acid polypeptide reads, in one-letter code: Arginine repressor (150 aa).

The protein belongs to the ArgR family.

It localises to the cytoplasm. It participates in amino-acid biosynthesis; L-arginine biosynthesis [regulation]. In terms of biological role, regulates arginine biosynthesis genes. The polypeptide is Arginine repressor (Clostridium kluyveri (strain NBRC 12016)).